A 212-amino-acid chain; its full sequence is ATP phosphoribosyltransferase (212 aa).

It belongs to the ATP phosphoribosyltransferase family. Short subfamily. In terms of assembly, heteromultimer composed of HisG and HisZ subunits.

Its subcellular location is the cytoplasm. It catalyses the reaction 1-(5-phospho-beta-D-ribosyl)-ATP + diphosphate = 5-phospho-alpha-D-ribose 1-diphosphate + ATP. Its pathway is amino-acid biosynthesis; L-histidine biosynthesis; L-histidine from 5-phospho-alpha-D-ribose 1-diphosphate: step 1/9. In terms of biological role, catalyzes the condensation of ATP and 5-phosphoribose 1-diphosphate to form N'-(5'-phosphoribosyl)-ATP (PR-ATP). Has a crucial role in the pathway because the rate of histidine biosynthesis seems to be controlled primarily by regulation of HisG enzymatic activity. The protein is ATP phosphoribosyltransferase of Geobacter metallireducens (strain ATCC 53774 / DSM 7210 / GS-15).